Reading from the N-terminus, the 425-residue chain is uncharacterized protein (425 aa).

The next 12 helical transmembrane spans lie at 15-35, 48-68, 84-104, 107-127, 149-169, 174-194, 225-245, 271-291, 295-315, 331-351, 370-390, and 395-415; these read LICA…SQML, LIGA…WAPL, MLLS…FDPL, LGTV…QDIV, INAY…LAAI, TVFL…LFLA, VIQA…DSFA, ALWS…KLGI, LWLF…LAAF, VVIA…VAFM, LSAL…GAVG, and FWFC…VAPL.

To E.coli AmpG and yeast YBR220c.

It localises to the cell inner membrane. This is an uncharacterized protein from Haemophilus influenzae (strain ATCC 51907 / DSM 11121 / KW20 / Rd).